The sequence spans 21 residues: Pedibin (21 aa).

The tract at residues 1–21 (AGEDVSHELEEKEKALANHSE) is disordered.

Functionally, morphogenetically active peptide. Active in foot development. The sequence is that of Pedibin from Hydra vulgaris (Hydra).